Consider the following 692-residue polypeptide: Elongation factor G (692 aa).

The region spanning 9–284 (EKIRNIGIMA…AVVDYLPSPV (276 aa)) is the tr-type G domain. GTP contacts are provided by residues 18–25 (AHIDAGKT), 82–86 (DTPGH), and 136–139 (NKMD).

The protein belongs to the TRAFAC class translation factor GTPase superfamily. Classic translation factor GTPase family. EF-G/EF-2 subfamily.

The protein resides in the cytoplasm. Its function is as follows. Catalyzes the GTP-dependent ribosomal translocation step during translation elongation. During this step, the ribosome changes from the pre-translocational (PRE) to the post-translocational (POST) state as the newly formed A-site-bound peptidyl-tRNA and P-site-bound deacylated tRNA move to the P and E sites, respectively. Catalyzes the coordinated movement of the two tRNA molecules, the mRNA and conformational changes in the ribosome. The polypeptide is Elongation factor G (Neorickettsia sennetsu (strain ATCC VR-367 / Miyayama) (Ehrlichia sennetsu)).